The primary structure comprises 418 residues: MNTLLAFIAIFSVLVFVHEWGHLYFAKKAGILCYEFAIGMGPKLFAFERNDTIYTIRLLPIGGYVRMAGEEPEQPTIRPGYEIGLVLDEKDTVKELIVNNKSKHPEAQVVQVERIDLVHDLFVETIDEDTGELVRYPIDEKAFIVQDEVAQIIAPWKRQFGSKPLPKRAMAIFAGPLMNFILGFVILLGLSLYQGVTLSSEIVINGENSPAEAAGLQDGDVITAVNGVEVDSWKEMTTEVKKYPGEEVSIDYERNGEALQTNATLSQVEVMPDEYEGFLGVSGVPEFSLLGSLQYAGNEFINMATSIFDTLGLIFTGQFSLDYISGPVGIYDITDQAVSLGIQTVIFFAALLSINLGVINLMPIPALDGGRLMFLAYEGIRGKPVSPEKEGAIQFIGFALVMLLMIVVTWNDISKLFS.

Helical transmembrane passes span 5 to 25 (LAFI…HLYF), 170 to 190 (MAIF…LLGL), 345 to 365 (VIFF…MPIP), and 390 to 410 (EGAI…VVTW). His-18 contributes to the Zn(2+) binding site. Glu-19 is an active-site residue. His-22 contacts Zn(2+). The 85-residue stretch at 183-267 (GFVILLGLSL…ALQTNATLSQ (85 aa)) folds into the PDZ domain.

This sequence belongs to the peptidase M50B family. It depends on Zn(2+) as a cofactor.

Its subcellular location is the cell membrane. In terms of biological role, is responsible for Site-2 cleavage of the RsiW anti-sigma factor. This results, after a third proteolytic step catalyzed by the ClpXP protease, in the release of SigW and the transcription activation of the genes under the control of the sigma-W factor. The chain is Zinc metalloprotease RasP (rasP) from Shouchella clausii (strain KSM-K16) (Alkalihalobacillus clausii).